Consider the following 314-residue polypeptide: Olfactory receptor 1 (314 aa).

Over 1-29 the chain is Extracellular; that stretch reads MTERNQTVISQFLLLGLPIPPEHQHVFYA. An N-linked (GlcNAc...) asparagine glycan is attached at Asn-5. The chain crosses the membrane as a helical span at residues 30–50; that stretch reads LFLSMYLTTVLGNLIIIILIL. The Cytoplasmic segment spans residues 51-59; that stretch reads LDSHLHTPM. The helical transmembrane segment at 60–81 threads the bilayer; that stretch reads YLFLSNLSFSDLCFSSVTMPKL. Over 82–97 the chain is Extracellular; the sequence is LQNMQSQVPSIPYAGC. Cysteines 97 and 179 form a disulfide. The chain crosses the membrane as a helical span at residues 98-118; that stretch reads LSQIYFFLFFGDLGNFLLVAM. At 119–143 the chain is on the cytoplasmic side; sequence AYDRYVAICFPLHYMSIMSPKLCVS. The helical transmembrane segment at 144–164 threads the bilayer; the sequence is LVVLSWVLTTFHAMLHTLLMA. Residues 165–196 lie on the Extracellular side of the membrane; sequence RLSFCEDNVIPHFFCDMSALLKLACSDTRVNE. The chain crosses the membrane as a helical span at residues 197–217; the sequence is VVIFIVVSLFLVLPFALIIMS. At 218-240 the chain is on the cytoplasmic side; sequence YVRIVSSILKVPSSQGIYKAFST. Residues 241–261 form a helical membrane-spanning segment; that stretch reads CGSHLSVVSLFYGTVIGLYLC. Over 262–271 the chain is Extracellular; that stretch reads PSSNNSTVKE. N-linked (GlcNAc...) asparagine glycosylation is found at Asn-265 and Asn-266. A helical membrane pass occupies residues 272–292; it reads TVMSLMYTVVTPMLNPFIYSL. Residues 293–314 are Cytoplasmic-facing; that stretch reads RNRDIKGAMERIFCKRKIQLNL.

It belongs to the G-protein coupled receptor 1 family. In terms of tissue distribution, olfactory epithelium.

It localises to the cell membrane. Its function is as follows. Odorant receptor. Activated by a lily-derived aldehyde as well as other odorants. May signal through an inositol 1,4,5-trisphosphate (IP3) second messenger system. This is Olfactory receptor 1 from Rattus norvegicus (Rat).